Reading from the N-terminus, the 566-residue chain is NXPE family member 3 (566 aa).

A signal peptide spans 1–32 (MEKYFPKYVPFFSLLALSGLLYLLWSITSLES). 5 N-linked (GlcNAc...) asparagine glycosylation sites follow: Asn-64, Asn-172, Asn-242, Asn-303, and Asn-344.

Belongs to the NXPE family.

Its subcellular location is the secreted. This Danio rerio (Zebrafish) protein is NXPE family member 3 (nxpe3).